The chain runs to 276 residues: Short-chain dehydrogenase anuF (276 aa).

The NADP(+) site is built by isoleucine 18, aspartate 68, lysine 130, tyrosine 176, lysine 180, valine 209, and threonine 211. The active-site Proton acceptor is the tyrosine 176. Tyrosine 176 acts as the Proton donor in catalysis. Lysine 180 (lowers pKa of active site Tyr) is an active-site residue.

It belongs to the short-chain dehydrogenases/reductases (SDR) family.

The enzyme catalyses (2R,9S)-annullatin H + A = (2R)-annullatin F + AH2. Its function is as follows. Cytochrome P450 monooxygenase; part of the gene cluster that mediates the biosynthesis of annullatin D, an alkylated aromatic polyketide with a fused dihydrobenzofuran lactone ring system that exhibits potent agonistic activities toward the cannabinoid receptors. Within the pathway, anuF is involved in the formation of (2R)-annullatin F from the diastereomer of (2S,9S)-annullatin H (compound 12). The annullatin backbone 2-hydroxymethyl-3-pentylphenol is assembled from one acetyl-CoA starter unit and 5 malonyl-CoA elongation units by cooperation of the highly reducing polyketide synthase anuA, the short-chain dehydrogenase anuB and the oxidoreductase anuC, before being hydroxylated at the C-5 alkyl chain by the cytochrome P450 monooxygenase anuE to form (8S)-annullatin E. The prenyltransferase anuH subsequently installs one isoprenyl group at the benzene ring to form (8S)-annullatin J. Enzymatic or nonenzymatic dihydro-benzofuran ring formation between the prenyl and the phenolic hydroxyl groups in (8S)-annullatin J results in two diastereomers (2S,9S)-annullatin H and compound 12. The intermediate (2S,9S)-annullatin H is then converted to (2S,9S)-annullatin D by the FAD-linked oxidoreductase anuG-catalyzed five-member lactone ring formation. The isomer 12 acts as a substrate for the short-chain dehydrogenase anuF and is oxidized to (2R)-annullatin F, which is subsequently acetylated by an acetyltransferase leading to (2R)-annullatin G formation. The remaining enzymes identified within the cluster, anuD, anuI and anuJ, seem not to be involved in annullatin biosynthesis. This Penicillium roqueforti (strain FM164) protein is Short-chain dehydrogenase anuF.